The chain runs to 198 residues: Threonylcarbamoyl-AMP synthase (198 aa).

One can recognise a YrdC-like domain in the interval 15–198 (LLKIYHIIKL…AISGQLIRRG (184 aa)).

Belongs to the SUA5 family. TsaC subfamily.

The protein localises to the cytoplasm. It carries out the reaction L-threonine + hydrogencarbonate + ATP = L-threonylcarbamoyladenylate + diphosphate + H2O. Required for the formation of a threonylcarbamoyl group on adenosine at position 37 (t(6)A37) in tRNAs that read codons beginning with adenine. Catalyzes the conversion of L-threonine, HCO(3)(-)/CO(2) and ATP to give threonylcarbamoyl-AMP (TC-AMP) as the acyladenylate intermediate, with the release of diphosphate. The protein is Threonylcarbamoyl-AMP synthase of Baumannia cicadellinicola subsp. Homalodisca coagulata.